The chain runs to 283 residues: DegV domain-containing protein lmo2514 (283 aa).

The DegV domain maps to 5-282 (IAVVTDSTTY…EGALGLTWSI (278 aa)). Ser-63 and Ser-96 together coordinate hexadecanoate.

Functionally, may bind long-chain fatty acids, such as palmitate, and may play a role in lipid transport or fatty acid metabolism. This is DegV domain-containing protein lmo2514 from Listeria monocytogenes serovar 1/2a (strain ATCC BAA-679 / EGD-e).